Consider the following 185-residue polypeptide: Ribosome-recycling factor (185 aa).

It belongs to the RRF family.

The protein localises to the cytoplasm. Functionally, responsible for the release of ribosomes from messenger RNA at the termination of protein biosynthesis. May increase the efficiency of translation by recycling ribosomes from one round of translation to another. In Shewanella pealeana (strain ATCC 700345 / ANG-SQ1), this protein is Ribosome-recycling factor.